The following is a 692-amino-acid chain: E3 ubiquitin-protein ligase brl1 (692 aa).

A coiled-coil region spans residues 302–370; sequence SNEEKIESIN…RNERDSLVAK (69 aa). An RING-type zinc finger spans residues 639 to 679; the sequence is CSVCNFSNWKSKLIPNCGHAFCSNCMEPFYEHKTSTCPQCE.

It belongs to the BRE1 family. In terms of assembly, component of the histone H2B ubiquitin ligase complex (HULC) composed of at least brl1, brl2, rhp6 and shf1.

It localises to the nucleus. It catalyses the reaction S-ubiquitinyl-[E2 ubiquitin-conjugating enzyme]-L-cysteine + [acceptor protein]-L-lysine = [E2 ubiquitin-conjugating enzyme]-L-cysteine + N(6)-ubiquitinyl-[acceptor protein]-L-lysine.. It functions in the pathway protein modification; protein ubiquitination. In terms of biological role, E3 ubiquitin-protein ligase which belongs to the histone H2B ubiquitin ligase complex (HULC) which mediates monoubiquitination of histone H2B to form H2BK123ub1. H2BK123ub1 gives a specific tag for epigenetic transcriptional activation and is also a prerequisite for H3K4me and H3K79me formation. The polypeptide is E3 ubiquitin-protein ligase brl1 (brl1) (Schizosaccharomyces pombe (strain 972 / ATCC 24843) (Fission yeast)).